Reading from the N-terminus, the 172-residue chain is Large ribosomal subunit protein uL10 (172 aa).

The protein belongs to the universal ribosomal protein uL10 family. As to quaternary structure, part of the ribosomal stalk of the 50S ribosomal subunit. The N-terminus interacts with L11 and the large rRNA to form the base of the stalk. The C-terminus forms an elongated spine to which L12 dimers bind in a sequential fashion forming a multimeric L10(L12)X complex.

In terms of biological role, forms part of the ribosomal stalk, playing a central role in the interaction of the ribosome with GTP-bound translation factors. The chain is Large ribosomal subunit protein uL10 from Brucella abortus (strain S19).